Here is a 313-residue protein sequence, read N- to C-terminus: uncharacterized protein (313 aa).

9 helical membrane passes run 31–53 (AWGI…GWLF), 62–84 (LFLF…WNPY), 104–126 (VFFW…IYTS), 147–161 (FALL…NQSV), 166–185 (SMFW…SFLL), 198–220 (RVLK…ALRF), 225–244 (SFSG…YLII), 264–282 (FFAA…TSSF), and 286–308 (PAAM…SILI).

The protein localises to the cell membrane. This is an uncharacterized protein from Archaeoglobus fulgidus (strain ATCC 49558 / DSM 4304 / JCM 9628 / NBRC 100126 / VC-16).